The primary structure comprises 317 residues: Methionyl-tRNA formyltransferase (317 aa).

Serine 112–proline 115 lines the (6S)-5,6,7,8-tetrahydrofolate pocket.

The protein belongs to the Fmt family.

It catalyses the reaction L-methionyl-tRNA(fMet) + (6R)-10-formyltetrahydrofolate = N-formyl-L-methionyl-tRNA(fMet) + (6S)-5,6,7,8-tetrahydrofolate + H(+). In terms of biological role, attaches a formyl group to the free amino group of methionyl-tRNA(fMet). The formyl group appears to play a dual role in the initiator identity of N-formylmethionyl-tRNA by promoting its recognition by IF2 and preventing the misappropriation of this tRNA by the elongation apparatus. This Mycoplasma capricolum subsp. capricolum (strain California kid / ATCC 27343 / NCTC 10154) protein is Methionyl-tRNA formyltransferase.